A 452-amino-acid chain; its full sequence is Probable pectate lyase 9 (452 aa).

The N-terminal stretch at 1 to 25 (MATSSLKLTSACFVLLFIFVGCVLT) is a signal peptide. Residues N88, N139, N214, and N233 are each glycosylated (N-linked (GlcNAc...) asparagine). D250 contributes to the Ca(2+) binding site. A glycan (N-linked (GlcNAc...) asparagine) is linked at N271. Residues D274 and D278 each coordinate Ca(2+). Residues N281 and N305 are each glycosylated (N-linked (GlcNAc...) asparagine). R330 is a catalytic residue. N374 carries N-linked (GlcNAc...) asparagine glycosylation.

It belongs to the polysaccharide lyase 1 family. The cofactor is Ca(2+).

It catalyses the reaction Eliminative cleavage of (1-&gt;4)-alpha-D-galacturonan to give oligosaccharides with 4-deoxy-alpha-D-galact-4-enuronosyl groups at their non-reducing ends.. It functions in the pathway glycan metabolism; pectin degradation; 2-dehydro-3-deoxy-D-gluconate from pectin: step 2/5. The chain is Probable pectate lyase 9 from Arabidopsis thaliana (Mouse-ear cress).